A 444-amino-acid chain; its full sequence is GTPase Der (444 aa).

EngA-type G domains follow at residues 2 to 167 and 173 to 349; these read LKVA…LKEI and FKFC…ENLN. GTP-binding positions include 8–15, 55–59, 118–121, 179–186, 226–230, and 291–294; these read GKPNVGKS, DTGGL, NKSE, GRPNVGKS, DTAGI, and NKWD. The region spanning 350–434 is the KH-like domain; the sequence is LKFNSKILTD…PITLYFKNKT (85 aa).

This sequence belongs to the TRAFAC class TrmE-Era-EngA-EngB-Septin-like GTPase superfamily. EngA (Der) GTPase family. Associates with the 50S ribosomal subunit.

GTPase that plays an essential role in the late steps of ribosome biogenesis. This chain is GTPase Der, found in Malacoplasma penetrans (strain HF-2) (Mycoplasma penetrans).